We begin with the raw amino-acid sequence, 278 residues long: Odontogenic ameloblast-associated protein (278 aa).

The signal sequence occupies residues 1-15 (MKIIILLGLIGATSS). The interval 103-124 (GGQAGQPDFSQQQTPSQTQQAS) is disordered. Over residues 107–124 (GQPDFSQQQTPSQTQQAS) the composition is skewed to low complexity. Residues Thr-116 and Thr-120 are each glycosylated (O-linked (GalNAc...) threonine). The segment at 126–128 (MSY) is interaction with ARHGEF5. Residues 230 to 278 (GFKQDNVGVSTPSTSPKPDTGNFFTSEINPTIAPLLPEQKVNADSLREP) are disordered. Over residues 236-258 (VGVSTPSTSPKPDTGNFFTSEIN) the composition is skewed to polar residues. O-linked (GalNAc...) threonine glycans are attached at residues Thr-240, Thr-243, Thr-249, and Thr-254.

It belongs to the ODAM family. In terms of assembly, interacts (via C-terminus) with ARHGEF5. O-glycosylated. Highly expressed in tooth-associated epithelia. In tooth, it is only detected in the ameloblast layer of the enamel organ, starting at post-secretory transition and extending throughout the maturation stage. Also detected in epithelial cells of the gingiva which bind it to the tooth surface (junctional epithelium) (at protein level). Predominantly expressed in mandible, but also expressed at weak level in nasal and salivary glands, and at much lower level in epididymis.

It is found in the secreted. It localises to the cytoplasm. The protein localises to the nucleus. Its function is as follows. Tooth-associated epithelia protein that probably plays a role in odontogenesis, the complex process that results in the initiation and generation of the tooth. May be incorporated in the enamel matrix at the end of mineralization process. Involved in the induction of RHOA activity via interaction with ARHGEF and expression of downstream factors such as ROCK. Plays a role in attachment of the junctional epithelium to the tooth surface. This Rattus norvegicus (Rat) protein is Odontogenic ameloblast-associated protein (Odam).